Here is a 159-residue protein sequence, read N- to C-terminus: Cyclic pyranopterin monophosphate synthase (159 aa).

Substrate is bound by residues 75 to 77 (LCH) and 113 to 114 (ME). Asp128 is a catalytic residue.

It belongs to the MoaC family. Homohexamer; trimer of dimers.

The enzyme catalyses (8S)-3',8-cyclo-7,8-dihydroguanosine 5'-triphosphate = cyclic pyranopterin phosphate + diphosphate. Its pathway is cofactor biosynthesis; molybdopterin biosynthesis. Catalyzes the conversion of (8S)-3',8-cyclo-7,8-dihydroguanosine 5'-triphosphate to cyclic pyranopterin monophosphate (cPMP). This chain is Cyclic pyranopterin monophosphate synthase, found in Vibrio atlanticus (strain LGP32) (Vibrio splendidus (strain Mel32)).